Consider the following 299-residue polypeptide: Non-homologous end-joining factor 1 (299 aa).

A globular head region spans residues 1 to 135 (MEELEQGLLM…ASPSLVSQHL (135 aa)). A coiled-coil region spans residues 128–170 (PSLVSQHLIRPLMGMSLALQCQVRELATLLHMKDLEIQDYQES). Phosphoserine; by PRKDC occurs at positions 132, 203, 245, and 251. Positions 224–288 (QEVQVGQKHQ…GPLQRPQLSK (65 aa)) are C-terminal tail. Polar residues predominate over residues 255–266 (NQPEQLVSSAPT). The tract at residues 255–299 (NQPEQLVSSAPTLSAPEKESTGTSGPLQRPQLSKVKRKKPRGLFS) is disordered. At Ser263 the chain carries Phosphoserine. A Phosphothreonine modification is found at Thr266. Ser287 carries the post-translational modification Phosphoserine. Basic residues predominate over residues 288-299 (KVKRKKPRGLFS). The XLM signature appears at 289–299 (VKRKKPRGLFS).

The protein belongs to the XRCC4-XLF family. XLF subfamily. As to quaternary structure, homodimer; mainly exists as a homodimer when not associated with XRCC4. Interacts with XRCC4; the interaction is direct and is mediated via a head-to-head interaction between N-terminal head regions. Component of the core long-range non-homologous end joining (NHEJ) complex (also named DNA-PK complex) composed of PRKDC, LIG4, XRCC4, XRCC6/Ku70, XRCC5/Ku86 and NHEJ1/XLF. Additional component of the NHEJ complex includes PAXX. Following autophosphorylation, PRKDC dissociates from DNA, leading to formation of the short-range NHEJ complex, composed of LIG4, XRCC4, XRCC6/Ku70, XRCC5/Ku86 and NHEJ1/XLF. Interacts with POLL (DNA polymerase lambda); promoting POLL recruitment to double-strand breaks (DSBs) and stimulation of the end-filling activity of POLL. Phosphorylated by PRKDC at the C-terminus in response to DNA damage. Phosphorylations by PRKDC at the C-terminus of XRCC4 and NHEJ1/XLF are highly redundant and regulate ability of the XRCC4-NHEJ1/XLF subcomplex to bridge DNA. Phosphorylation does not prevent interaction with XRCC4 but disrupts ability to bridge DNA and promotes detachment from DNA. In terms of tissue distribution, ubiquitously expressed.

It localises to the nucleus. It is found in the chromosome. Functionally, DNA repair protein involved in DNA non-homologous end joining (NHEJ); it is required for double-strand break (DSB) repair and V(D)J recombination and is also involved in telomere maintenance. Plays a key role in NHEJ by promoting the ligation of various mismatched and non-cohesive ends. Together with PAXX, collaborates with DNA polymerase lambda (POLL) to promote joining of non-cohesive DNA ends. May act in concert with XRCC5-XRCC6 (Ku) to stimulate XRCC4-mediated joining of blunt ends and several types of mismatched ends that are non-complementary or partially complementary. In some studies, has been shown to associate with XRCC4 to form alternating helical filaments that bridge DNA and act like a bandage, holding together the broken DNA until it is repaired. Alternatively, it has also been shown that rather than forming filaments, a single NHEJ1 dimer interacts through both head domains with XRCC4 to promote the close alignment of DNA ends. The XRCC4-NHEJ1/XLF subcomplex binds to the DNA fragments of a DSB in a highly diffusive manner and robustly bridges two independent DNA molecules, holding the broken DNA fragments in close proximity to one other. The mobility of the bridges ensures that the ends remain accessible for further processing by other repair factors. Binds DNA in a length-dependent manner. In Homo sapiens (Human), this protein is Non-homologous end-joining factor 1.